A 371-amino-acid chain; its full sequence is Sporulation-specific protein 2 (371 aa).

The protein resides in the spore wall. Functionally, essential for sporulation and seems to have a role at the time of, or after, initiation of nuclear division. Appears to have a role in outer spore wall formation. This chain is Sporulation-specific protein 2 (SSP2), found in Saccharomyces cerevisiae (strain ATCC 204508 / S288c) (Baker's yeast).